Reading from the N-terminus, the 2179-residue chain is Genome polyprotein (2179 aa).

Disordered regions lie at residues 503 to 531 (FSKDGADHTPKIPKRNVVLPSGAKDPTGD), 623 to 678 (QPQK…YPIQ), 703 to 738 (RAKKKLQKDEVKQKTSLPPESKRPDPQSSSHLGDQF), and 753 to 847 (EPSV…PPKM). Polar residues-rich tracts occupy residues 630 to 642 (DTPSYQSSYQPFH) and 659 to 678 (TTFANTPQPQPSLFSQYPIQ). Over residues 758–770 (SEDTSSQSYISTE) the composition is skewed to polar residues. Low complexity predominate over residues 783–806 (SEESTQLSQLSSSSNDSPENNENT). Acidic residues predominate over residues 819-831 (EISEVEDEVDGMT). The CCHC-type zinc finger occupies 1112–1125 (CFTCGKIGHFSRNC). Residue D1226 is the For protease activity; shared with dimeric partner of the active site. The 183-residue stretch at 1409-1591 (QQFDLIEPSD…NKIQFLGMDF (183 aa)) folds into the Reverse transcriptase domain. The Mg(2+) site is built by D1479, D1542, and D1543. 3 disordered regions span residues 1822–1848 (QRRTRSSSTKSKADSSQSTGSSYKLSH), 2114–2144 (NIVKDSPRKRKGKAKSRSSTRSEKRRAKNKC), and 2160–2179 (YSTKPSTPSWTQDSSSEPCV). Low complexity predominate over residues 1827–1840 (SSSTKSKADSSQST). Residues 2120 to 2144 (PRKRKGKAKSRSSTRSEKRRAKNKC) are compositionally biased toward basic residues. The span at 2162-2179 (TKPSTPSWTQDSSSEPCV) shows a compositional bias: polar residues.

This sequence belongs to the Petuviruses genome polyprotein family.

It catalyses the reaction DNA(n) + a 2'-deoxyribonucleoside 5'-triphosphate = DNA(n+1) + diphosphate. In terms of biological role, encodes presumably for at least four polypeptides: Movement protein (MP), capsid protein (CP), Protease (PR), and reverse transcriptase (RT). This chain is Genome polyprotein, found in Petunia vein clearing virus (isolate Shepherd) (PVCV).